The chain runs to 345 residues: MTDKTSLSYKDAGVDIDAGNALVGRIKGVVKKTRRPEVMGGLGGFGALCALPQKYREPVLVSGTDGVGTKLRLAMDLKRHDTIGIDLVAMCVNDLVVQGAEPLFFLDYYATGKLDVDTASAVISGIAEGCLQSGCSLVGGETAEMPGMYHGEDYDVAGFCVGVVEKSEIIDGSKVSDGDVLIALGSSGPHSNGYSLVRKILEVSGCDPQTTELDGKPLADHLLAPTRIYVKSVLELIEKVDVHAIAHLTGGGFWENIPRVLPDNTRAVIDESSWQWPEVFNWLQTAGNVERHEMYRTFNCGVGMIIALPAPEVDKALALLNANGENAWKIGIIKASDSEQRVVIE.

It belongs to the AIR synthase family.

The protein resides in the cytoplasm. The enzyme catalyses 2-formamido-N(1)-(5-O-phospho-beta-D-ribosyl)acetamidine + ATP = 5-amino-1-(5-phospho-beta-D-ribosyl)imidazole + ADP + phosphate + H(+). The protein operates within purine metabolism; IMP biosynthesis via de novo pathway; 5-amino-1-(5-phospho-D-ribosyl)imidazole from N(2)-formyl-N(1)-(5-phospho-D-ribosyl)glycinamide: step 2/2. In Escherichia coli O127:H6 (strain E2348/69 / EPEC), this protein is Phosphoribosylformylglycinamidine cyclo-ligase.